The primary structure comprises 233 residues: Probable GTP-binding protein EngB (233 aa).

Positions 21–228 (GLPEVALVGR…WRWIREHVQD (208 aa)) constitute an EngB-type G domain. GTP-binding positions include 29–36 (GRSNVGKS) and 56–60 (GRTQA). Residues Ser-36 and Thr-58 each contribute to the Mg(2+) site. Positions 68 to 87 (PQGKPRPEGEPQPDKDAGRT) are disordered. A compositionally biased stretch (basic and acidic residues) spans 72-85 (PRPEGEPQPDKDAG). GTP-binding positions include 107 to 110 (DMPG), 174 to 177 (TKAD), and 207 to 209 (FSA).

This sequence belongs to the TRAFAC class TrmE-Era-EngA-EngB-Septin-like GTPase superfamily. EngB GTPase family. Mg(2+) is required as a cofactor.

Necessary for normal cell division and for the maintenance of normal septation. The protein is Probable GTP-binding protein EngB of Symbiobacterium thermophilum (strain DSM 24528 / JCM 14929 / IAM 14863 / T).